Here is a 1331-residue protein sequence, read N- to C-terminus: ABC multidrug transporter MDR2 (1331 aa).

Basic and acidic residues-rich tracts occupy residues 1–20 (MVEV…KQEN) and 31–41 (SDKEKVAKKGN). Residues 1 to 51 (MVEVSEKPNTQDDGVSKQENRNPASSSSSTSDKEKVAKKGNSDATKSSTPE) form a disordered region. 4 consecutive transmembrane segments (helical) span residues 93–113 (MIFL…LPLF), 147–167 (YFVY…VGFI), 219–239 (KVGL…IGYV), and 242–262 (WKLA…MGGI). The ABC transmembrane type-1 1 domain occupies 97 to 387 (AIVSLASIAA…VAPNTQAFAS (291 aa)). Asparagine 293 carries N-linked (GlcNAc...) asparagine glycosylation. 2 helical membrane passes run 325-345 (LGIM…LGFW) and 358-378 (LSAI…IGNV). Positions 422 to 667 (IEFRGIKHIY…KGTYLQLVEA (246 aa)) constitute an ABC transporter 1 domain. 457–464 (GPSGSGKS) is an ATP binding site. Residues asparagine 529 and asparagine 737 are each glycosylated (N-linked (GlcNAc...) asparagine). 2 helical membrane passes run 762–782 (LCGF…SVFF) and 810–830 (FLML…IFAI). Positions 764–1051 (GFFFAVLSGA…VFSFSPDMGK (288 aa)) constitute an ABC transmembrane type-1 2 domain. The N-linked (GlcNAc...) asparagine glycan is linked to asparagine 860. Helical transmembrane passes span 884–904 (LGTI…ALAF), 910–930 (LVCI…FWIL), 995–1015 (ASQS…GGLL), and 1025–1045 (FFLC…VFSF). The ABC transporter 2 domain maps to 1086–1324 (IEFRDVHFRY…KGRYYELVHM (239 aa)). A glycan (N-linked (GlcNAc...) asparagine) is linked at asparagine 1108. Residue 1121 to 1128 (GPSGCGKS) coordinates ATP.

It belongs to the ABC transporter superfamily. ABCB family. Multidrug resistance exporter (TC 3.A.1.201) subfamily.

It is found in the cell membrane. The catalysed reaction is itraconazole(in) + ATP + H2O = itraconazole(out) + ADP + phosphate + H(+). In terms of biological role, pleiotropic ABC efflux transporter that may be involved in the modulation susceptibility to a wide range of unrelated cytotoxic compounds. The chain is ABC multidrug transporter MDR2 from Trichophyton equinum (strain ATCC MYA-4606 / CBS 127.97) (Horse ringworm fungus).